The primary structure comprises 114 residues: U10-agatoxin-Ao1a (114 aa).

A signal peptide spans 1 to 15 (MCVATCLCTFAYVLA). Positions 16-32 (KSDEGENLISKVEETQR) are excised as a propeptide. 5 disulfide bridges follow: Cys-34-Cys-53, Cys-41-Cys-59, Cys-50-Cys-86, Cys-52-Cys-76, and Cys-61-Cys-74. The disordered stretch occupies residues 95–114 (GSQNPSLCKDPNPRRRRHGK).

Belongs to the neurotoxin 04 (omega-agtx) family. 03 (type II/III omega-agtx) subfamily. Expressed by the venom gland.

It is found in the secreted. In terms of biological role, inhibits voltage-gated calcium channels (Cav). The polypeptide is U10-agatoxin-Ao1a (Agelena orientalis (Funnel-web spider)).